A 142-amino-acid chain; its full sequence is Hemoglobin subunit alpha-1 (142 aa).

The 141-residue stretch at 2–142 (LLSADDKKHI…VSSVLTSKYR (141 aa)) folds into the Globin domain. Position 59 (histidine 59) interacts with O2. Histidine 88 provides a ligand contact to heme b.

Belongs to the globin family. In terms of assembly, heterotetramer of two alpha chains and two beta chains. In terms of tissue distribution, red blood cells.

In terms of biological role, involved in oxygen transport from the lung to the various peripheral tissues. This is Hemoglobin subunit alpha-1 (hba1) from Xenopus borealis (Kenyan clawed frog).